Reading from the N-terminus, the 894-residue chain is LRR receptor-like serine/threonine-protein kinase IOS1 (894 aa).

A signal peptide spans 1–23; it reads MAFSSCFLLVLLQIFSALLLCLA. The Extracellular segment spans residues 24 to 515; sequence QDQSGFISLD…KKKKNTVIAP (492 aa). 14 N-linked (GlcNAc...) asparagine glycosylation sites follow: asparagine 48, asparagine 95, asparagine 137, asparagine 179, asparagine 223, asparagine 230, asparagine 260, asparagine 287, asparagine 309, asparagine 338, asparagine 399, asparagine 441, asparagine 462, and asparagine 469. LRR repeat units follow at residues 431–457 and 459–479; these read LTSLEVLDLSNNSLTGSVPEFLANMET and KLINLSGNELNGSIPATLLDK. Residues 516–536 traverse the membrane as a helical segment; it reads VAASLVSVFLIGAGIVTFLIL. Residues 537–894 are Cytoplasmic-facing; the sequence is KRKKRTKLGL…FTTELNPGAR (358 aa). Position 577 is a phosphothreonine (threonine 577). A Protein kinase domain is found at 586–858; the sequence is NNFERVLGRG…QVVMDLKECL (273 aa). ATP-binding positions include 592 to 600 and lysine 613; that span reads LGRGGFGVV. Position 658 is a phosphotyrosine (tyrosine 658). Aspartate 710 serves as the catalytic Proton acceptor. At serine 744 the chain carries Phosphoserine. Phosphothreonine is present on residues threonine 745 and threonine 750. Residue tyrosine 758 is modified to Phosphotyrosine.

This sequence belongs to the protein kinase superfamily. Ser/Thr protein kinase family. In terms of assembly, homodimerization. Interacts with BAK1 and FLS2; triggers FLS2-BAK1 complex formation upon microbe-associated molecular patterns (MAMPs) treatment. Also binds to CERK1 and EFR. In terms of tissue distribution, expressed in roots, cotyledons, leaves, flowers and siliques.

The protein localises to the cell membrane. Negatively regulates the abscisic acid (ABA) signaling pathway. Required for full susceptibility to filamentous (hemi)biotrophic oomycetes (e.g. H.arabidopsidis and P.parasitica) and fungal (e.g. E.cruciferarum) pathogens, probably by triggering the repression of ABA-sensitive COLD REGULATED and RESISTANCE TO DESICCATION genes during infection, but independently of immune responses. Involved in BAK1-dependent and BAK1-independent microbe-associated molecular patterns (MAMPs)-triggered immunity (PTI) leading to defense responses, including callose deposition and MAPK cascade activation, toward pathogenic bacteria (e.g. P.syringae). Required for chitin-mediated PTI. This Arabidopsis thaliana (Mouse-ear cress) protein is LRR receptor-like serine/threonine-protein kinase IOS1.